The following is a 472-amino-acid chain: 3-isopropylmalate dehydratase large subunit (472 aa).

Positions 352, 413, and 416 each coordinate [4Fe-4S] cluster.

The protein belongs to the aconitase/IPM isomerase family. LeuC type 1 subfamily. In terms of assembly, heterodimer of LeuC and LeuD. [4Fe-4S] cluster serves as cofactor.

It catalyses the reaction (2R,3S)-3-isopropylmalate = (2S)-2-isopropylmalate. It functions in the pathway amino-acid biosynthesis; L-leucine biosynthesis; L-leucine from 3-methyl-2-oxobutanoate: step 2/4. Functionally, catalyzes the isomerization between 2-isopropylmalate and 3-isopropylmalate, via the formation of 2-isopropylmaleate. The protein is 3-isopropylmalate dehydratase large subunit of Pseudomonas fluorescens (strain ATCC BAA-477 / NRRL B-23932 / Pf-5).